Here is a 177-residue protein sequence, read N- to C-terminus: Small ribosomal subunit protein bS16 (177 aa).

The tract at residues 80-177 is disordered; it reads GIIAMPANGS…AAEAPKEEAK (98 aa). Positions 107–122 are enriched in low complexity; that stretch reads AAPAAAPKAEAAPAAE.

The protein belongs to the bacterial ribosomal protein bS16 family.

The sequence is that of Small ribosomal subunit protein bS16 from Pelagibacter ubique (strain HTCC1062).